Here is a 540-residue protein sequence, read N- to C-terminus: Raucaffricine-O-beta-D-glucosidase (540 aa).

A beta-D-glucoside contacts are provided by residues glutamine 36, histidine 140, and asparagine 185–glutamate 186. Glutamate 186 serves as the catalytic Proton donor. Cysteine 221 and cysteine 230 are joined by a disulfide. A beta-D-glucoside contacts are provided by residues tyrosine 347, glutamate 420, tryptophan 469, glutamate 476 to tryptophan 477, and phenylalanine 485. Glutamate 420 serves as the catalytic Nucleophile.

Belongs to the glycosyl hydrolase 1 family.

It carries out the reaction raucaffricine + H2O = vomilenine + D-glucose. The enzyme catalyses vomilenine + UDP-alpha-D-glucose = raucaffricine + UDP + H(+). Glucosidase specifically involved in alkaloid biosynthesis leading to the accumulation of several alkaloids, including ajmaline, an important plant-derived pharmaceutical used in the treatment of heart disorders. The protein is Raucaffricine-O-beta-D-glucosidase of Rauvolfia serpentina (Serpentine wood).